Reading from the N-terminus, the 332-residue chain is Glycerol-3-phosphate dehydrogenase [NAD(P)+] (332 aa).

NADPH-binding residues include Ser15, Trp16, and Lys110. Residues Lys110, Gly137, and Ser139 each coordinate sn-glycerol 3-phosphate. Ala141 is an NADPH binding site. The sn-glycerol 3-phosphate site is built by Lys192, Asp245, Ser255, Arg256, and Asn257. Lys192 acts as the Proton acceptor in catalysis. Arg256 lines the NADPH pocket. Glu282 provides a ligand contact to NADPH.

It belongs to the NAD-dependent glycerol-3-phosphate dehydrogenase family.

The protein localises to the cytoplasm. It catalyses the reaction sn-glycerol 3-phosphate + NAD(+) = dihydroxyacetone phosphate + NADH + H(+). The catalysed reaction is sn-glycerol 3-phosphate + NADP(+) = dihydroxyacetone phosphate + NADPH + H(+). The protein operates within membrane lipid metabolism; glycerophospholipid metabolism. Catalyzes the reduction of the glycolytic intermediate dihydroxyacetone phosphate (DHAP) to sn-glycerol 3-phosphate (G3P), the key precursor for phospholipid synthesis. The polypeptide is Glycerol-3-phosphate dehydrogenase [NAD(P)+] (Coxiella burnetii (strain CbuG_Q212) (Coxiella burnetii (strain Q212))).